Here is a 214-residue protein sequence, read N- to C-terminus: Probable GTP-binding protein EngB (214 aa).

One can recognise an EngB-type G domain in the interval 22–194; sequence NLPEIAFAGR…WARIDALLSP (173 aa). GTP-binding positions include 30 to 37, 57 to 61, 75 to 78, 142 to 145, and 173 to 175; these read GRSNVGKS, GRTQL, DLPG, TKCD, and FSA. Residues Ser37 and Thr59 each coordinate Mg(2+).

Belongs to the TRAFAC class TrmE-Era-EngA-EngB-Septin-like GTPase superfamily. EngB GTPase family. Mg(2+) serves as cofactor.

Functionally, necessary for normal cell division and for the maintenance of normal septation. This chain is Probable GTP-binding protein EngB, found in Citrifermentans bemidjiense (strain ATCC BAA-1014 / DSM 16622 / JCM 12645 / Bem) (Geobacter bemidjiensis).